The following is a 242-amino-acid chain: Dihydropteridine reductase (242 aa).

12–36 (LVYGGRGALGSRCVQAFRARNWWVA) contributes to the NADP(+) binding site. 4 positions are modified to N6-succinyllysine: Lys71, Lys77, Lys94, and Lys100. Tyr148 (proton acceptor) is an active-site residue.

The protein belongs to the short-chain dehydrogenases/reductases (SDR) family. As to quaternary structure, homodimer.

The catalysed reaction is 5,6,7,8-tetrahydropteridine + NAD(+) = 6,7-dihydropteridine + NADH + H(+). It carries out the reaction 5,6,7,8-tetrahydropteridine + NADP(+) = 6,7-dihydropteridine + NADPH + H(+). Its function is as follows. Catalyzes the conversion of quinonoid dihydrobiopterin into tetrahydrobiopterin. The chain is Dihydropteridine reductase (QDPR) from Bos taurus (Bovine).